The chain runs to 385 residues: Transcription factor TGAL3 (385 aa).

Residues 62 to 113 are disordered; it reads LHALVGGGDGGDDAGEQRGADSSAVSKERRGDQKMQRRLAQNREAARKSRMR. The span at 87–96 shows a compositional bias: basic and acidic residues; sequence SKERRGDQKM. One can recognise a bZIP domain in the interval 93–137; that stretch reads DQKMQRRLAQNREAARKSRMRKKAYIQQLESSRSKLMHLEQELQR. The segment at 95-115 is basic motif; the sequence is KMQRRLAQNREAARKSRMRKK. Positions 121–135 are leucine-zipper; sequence LESSRSKLMHLEQEL. In terms of domain architecture, DOG1 spans 162–382; sequence TLAFDLEYAR…RALSSLWLAR (221 aa).

The protein belongs to the bZIP family. As to quaternary structure, interacts with NPR1/NH1, NPR2/NH2 and NPR3/NH3.

The protein localises to the nucleus. In terms of biological role, transcriptional regulator involved in defense response. The chain is Transcription factor TGAL3 from Oryza sativa subsp. japonica (Rice).